We begin with the raw amino-acid sequence, 455 residues long: Regulatory protein LuxO (455 aa).

Residues 1 to 112 (MVEDTASVAA…RLRVTVNNAI (112 aa)) form the Response regulatory domain. A 4-aspartylphosphate modification is found at Asp47. The 230-residue stretch at 132 to 361 (FIGSSQTMQA…LQNVLRNVVV (230 aa)) folds into the Sigma-54 factor interaction domain. ATP is bound by residues 160–167 (GESGTGKE) and 223–232 (ADGGTLFLDE).

In terms of biological role, involved in the regulation of different processes depending on the cell density. Acts together with sigma-54 to repress, perhaps indirectly, some genes. This Vibrio cholerae serotype O1 (strain ATCC 39315 / El Tor Inaba N16961) protein is Regulatory protein LuxO (luxO).